The sequence spans 564 residues: Eukaryotic translation initiation factor 3 subunit L (564 aa).

S2 carries the N-acetylserine modification. S21 is subject to Phosphoserine. Residues 331 to 537 (DAIRVFANIL…IHIADTKVAR (207 aa)) form the PCI domain. Residues K465 and K549 each carry the N6-acetyllysine modification.

Belongs to the eIF-3 subunit L family. Component of the eukaryotic translation initiation factor 3 (eIF-3) complex, which is composed of 13 subunits: EIF3A, EIF3B, EIF3C, EIF3D, EIF3E, EIF3F, EIF3G, EIF3H, EIF3I, EIF3J, EIF3K, EIF3L and EIF3M. The eIF-3 complex appears to include 3 stable modules: module A is composed of EIF3A, EIF3B, EIF3G and EIF3I; module B is composed of EIF3F, EIF3H, and EIF3M; and module C is composed of EIF3C, EIF3D, EIF3E, EIF3K and EIF3L. EIF3C of module C binds EIF3B of module A and EIF3H of module B, thereby linking the three modules. EIF3J is a labile subunit that binds to the eIF-3 complex via EIF3B. The eIF-3 complex interacts with RPS6KB1 under conditions of nutrient depletion. Mitogenic stimulation leads to binding and activation of a complex composed of MTOR and RPTOR, leading to phosphorylation and release of RPS6KB1 and binding of EIF4B to eIF-3. Interacts with RRN3.

It is found in the cytoplasm. In terms of biological role, component of the eukaryotic translation initiation factor 3 (eIF-3) complex, which is required for several steps in the initiation of protein synthesis. The eIF-3 complex associates with the 40S ribosome and facilitates the recruitment of eIF-1, eIF-1A, eIF-2:GTP:methionyl-tRNAi and eIF-5 to form the 43S pre-initiation complex (43S PIC). The eIF-3 complex stimulates mRNA recruitment to the 43S PIC and scanning of the mRNA for AUG recognition. The eIF-3 complex is also required for disassembly and recycling of post-termination ribosomal complexes and subsequently prevents premature joining of the 40S and 60S ribosomal subunits prior to initiation. The eIF-3 complex specifically targets and initiates translation of a subset of mRNAs involved in cell proliferation, including cell cycling, differentiation and apoptosis, and uses different modes of RNA stem-loop binding to exert either translational activation or repression. This Pan troglodytes (Chimpanzee) protein is Eukaryotic translation initiation factor 3 subunit L.